The primary structure comprises 219 residues: 2-hydroxy-3-keto-5-methylthiopentenyl-1-phosphate phosphatase (219 aa).

This sequence belongs to the HAD-like hydrolase superfamily. MtnX family.

It carries out the reaction 2-hydroxy-5-methylsulfanyl-3-oxopent-1-enyl phosphate + H2O = 1,2-dihydroxy-5-(methylsulfanyl)pent-1-en-3-one + phosphate. The protein operates within amino-acid biosynthesis; L-methionine biosynthesis via salvage pathway; L-methionine from S-methyl-5-thio-alpha-D-ribose 1-phosphate: step 4/6. Its function is as follows. Dephosphorylates 2-hydroxy-3-keto-5-methylthiopentenyl-1-phosphate (HK-MTPenyl-1-P) yielding 1,2-dihydroxy-3-keto-5-methylthiopentene (DHK-MTPene). In Bacillus thuringiensis subsp. konkukian (strain 97-27), this protein is 2-hydroxy-3-keto-5-methylthiopentenyl-1-phosphate phosphatase.